The primary structure comprises 246 residues: Ribonuclease PH (246 aa).

Residues Arg91 and 129–131 each bind phosphate; that span reads GTR.

The protein belongs to the RNase PH family. As to quaternary structure, homohexameric ring arranged as a trimer of dimers.

The enzyme catalyses tRNA(n+1) + phosphate = tRNA(n) + a ribonucleoside 5'-diphosphate. Its function is as follows. Phosphorolytic 3'-5' exoribonuclease that plays an important role in tRNA 3'-end maturation. Removes nucleotide residues following the 3'-CCA terminus of tRNAs; can also add nucleotides to the ends of RNA molecules by using nucleoside diphosphates as substrates, but this may not be physiologically important. Probably plays a role in initiation of 16S rRNA degradation (leading to ribosome degradation) during starvation. This chain is Ribonuclease PH, found in Burkholderia orbicola (strain MC0-3).